Consider the following 156-residue polypeptide: Small ribosomal subunit protein uS7 (156 aa).

The protein belongs to the universal ribosomal protein uS7 family. Part of the 30S ribosomal subunit. Contacts proteins S9 and S11.

Functionally, one of the primary rRNA binding proteins, it binds directly to 16S rRNA where it nucleates assembly of the head domain of the 30S subunit. Is located at the subunit interface close to the decoding center, probably blocks exit of the E-site tRNA. The protein is Small ribosomal subunit protein uS7 of Dictyoglomus turgidum (strain DSM 6724 / Z-1310).